A 334-amino-acid chain; its full sequence is MATLKEKLIAPVAEEEATVPNNKITVVGVGQVGMACAISILGKSLADELALVDVLEDKLKGEMMDLQHGSLFLQTPKIVADKDYSVTANSKIVVVTAGVRQQEGESRLNLVQRNVNVFKFIIPQIVKYSPDCIIIVVSNPVDILTYVTWKLSGLPKHRVIGSGCNLDSARFRYLMAEKLGIHPSSCHGWILGEHGDSSVAVWSGVNVAGVSLQELNPEMGTDNDSENWKEVHKMVVESAYEVIKLKGYTNWAIGLSVADLIESMLKNLSRIHPVSTMVKGMYGIENEVFLSLPCILNARGLTSVINQKLKDDEVAQLKKSADTLWDIQKDLKDL.

A2 bears the N-acetylalanine mark. The residue at position 7 (K7) is an N6-acetyllysine. Residue 31–53 (QVGMACAISILGKSLADELALVD) coordinates NAD(+). S44 bears the Phosphoserine mark. K58 carries the N6-acetyllysine modification. An NAD(+)-binding site is contributed by R100. R107 is a substrate binding site. The residue at position 119 (K119) is an N6-acetyllysine. NAD(+) is bound at residue N139. Substrate-binding residues include N139 and R170. H194 (proton acceptor) is an active-site residue. A Phosphotyrosine modification is found at Y240. T249 provides a ligand contact to substrate. An N6-acetyllysine modification is found at K329.

Belongs to the LDH/MDH superfamily. LDH family. As to quaternary structure, homotetramer. Interacts with PTEN upstream reading frame protein MP31; the interaction leads to inhibition of mitochondrial lactate dehydrogenase activity, preventing conversion of lactate to pyruvate in mitochondria. In terms of tissue distribution, predominantly expressed in aerobic tissues such as cardiac muscle.

Its subcellular location is the cytoplasm. The protein resides in the mitochondrion inner membrane. It catalyses the reaction (S)-lactate + NAD(+) = pyruvate + NADH + H(+). Its pathway is fermentation; pyruvate fermentation to lactate; (S)-lactate from pyruvate: step 1/1. Interconverts simultaneously and stereospecifically pyruvate and lactate with concomitant interconversion of NADH and NAD(+). This chain is L-lactate dehydrogenase B chain (LDHB), found in Homo sapiens (Human).